The primary structure comprises 510 residues: MIWHVQNENFILDSTRIFMKAFHLLLFHGSFIFPECILIFGLILLLMIDSTSDQKDRPWFYFISSTSLVMSITALLFRWKEEPIISFSGNFQTNNFNEIFQFLILLCSTLCIPLSVEYIECTEMAITEFLLFVLTATLGGMFLCGANDLITIFVAPECFSLCSYLLSGYTKRDVRSNEATTKYLLMGGASSSILVHGFSWLYGSSGGEIELQEIVNGLINTQMYNSPGISIALISITVGIGFKLSPAPFHQWTPDVYEGSPTPVVAFLSVTSKVAASASATRIFDIPFYFSSNEWHLLLEILAILSMILGNLIAITQTSMKRMLAYSSIGQIGYVIIGIIVGDSNDGYASMITYMLFYISMNLGTFACIVSFGLRTGTDNIRDYAGLYTKDPFLALSLALCLLSLGGLPPLAGFFGKLYLFWCGWQAGLYFLVSMGLLTSVVSIYYYLKIIKLLMTGRNQEITPHVRNYRRSTLRSNNSIEWSMTVCVIASTIPGISMNPILAIAQDTLF.

The next 13 helical transmembrane spans lie at 24–44 (LLLFHGSFIFPECILIFGLIL), 59–79 (WFYFISSTSLVMSITALLFRW), 99–119 (IFQFLILLCSTLCIPLSVEYI), 124–144 (MAITEFLLFVLTATLGGMFLC), 149–169 (LITIFVAPECFSLCSYLLSGY), 183–203 (YLLMGGASSSILVHGFSWLYG), 229–249 (ISIALISITVGIGFKLSPAPF), 295–315 (WHLLLEILAILSMILGNLIAI), 323–343 (MLAYSSIGQIGYVIIGIIVGD), 354–374 (YMLFYISMNLGTFACIVSFGL), 395–415 (ALSLALCLLSLGGLPPLAGFF), 418–438 (LYLFWCGWQAGLYFLVSMGLL), and 484–504 (MTVCVIASTIPGISMNPILAI).

It belongs to the complex I subunit 2 family. As to quaternary structure, NDH is composed of at least 16 different subunits, 5 of which are encoded in the nucleus.

The protein resides in the plastid. Its subcellular location is the chloroplast thylakoid membrane. It carries out the reaction a plastoquinone + NADH + (n+1) H(+)(in) = a plastoquinol + NAD(+) + n H(+)(out). The catalysed reaction is a plastoquinone + NADPH + (n+1) H(+)(in) = a plastoquinol + NADP(+) + n H(+)(out). In terms of biological role, NDH shuttles electrons from NAD(P)H:plastoquinone, via FMN and iron-sulfur (Fe-S) centers, to quinones in the photosynthetic chain and possibly in a chloroplast respiratory chain. The immediate electron acceptor for the enzyme in this species is believed to be plastoquinone. Couples the redox reaction to proton translocation, and thus conserves the redox energy in a proton gradient. The sequence is that of NAD(P)H-quinone oxidoreductase subunit 2, chloroplastic from Sisyrinchium montanum (Strict blue-eyed grass).